Here is a 265-residue protein sequence, read N- to C-terminus: NADH-ubiquinone oxidoreductase chain 5 (265 aa).

8 helical membrane-spanning segments follow: residues 10-30, 50-70, 92-112, 113-133, 153-173, 183-203, 215-235, and 244-264; these read ISFY…LKFL, IVMT…VLLI, ILLV…PNLI, SILL…IYFQ, VALL…YIFY, MMII…QIPF, TPVS…YLLI, and WWMA…AGLG.

It belongs to the complex I subunit 5 family.

Its subcellular location is the mitochondrion inner membrane. The catalysed reaction is a ubiquinone + NADH + 5 H(+)(in) = a ubiquinol + NAD(+) + 4 H(+)(out). Its function is as follows. Core subunit of the mitochondrial membrane respiratory chain NADH dehydrogenase (Complex I) that is believed to belong to the minimal assembly required for catalysis. Complex I functions in the transfer of electrons from NADH to the respiratory chain. The immediate electron acceptor for the enzyme is believed to be ubiquinone. This Anopheles quadriannulatus (Mosquito) protein is NADH-ubiquinone oxidoreductase chain 5 (ND5).